The sequence spans 180 residues: Putative manganese efflux pump MntP (180 aa).

Transmembrane regions (helical) follow at residues 4–24 (FVTICIMAAALGMDAFSVALG), 40–60 (LTIGLFHVAMPLAGMAVGKWL), 64–84 (FDVIATYIGGGLLLVIGVQMA), 103–123 (LLLFAVGVSLDSFSAGLSFGI), 129–149 (FVTVGMIGAMSMVMSWIGLIV), and 156–176 (FLGAYGELLGGLVLIGFGLKI).

It belongs to the MntP (TC 9.B.29) family.

The protein resides in the cell membrane. Its function is as follows. Probably functions as a manganese efflux pump. The protein is Putative manganese efflux pump MntP of Shouchella clausii (strain KSM-K16) (Alkalihalobacillus clausii).